The chain runs to 260 residues: MGFLEEKKILVTGISNKYSIAFGIAKALHKQNATLAFSYHTDRLKNKVYELAKELGVKIVIPCDVSDDNSIKRLFFNISKKWITFDGFIHSIAFAPKNQLSGDYVSSITRLDFSNVLDVSSYSFVGMAKACRSILKKGSSLLTLSYIGSKKVVPNYNVMGIAKASLESNVRYMASCMGLNGIRVNAISSSPIKTLSSYHIKNFKKILNHTTSRSLNNNLTTVEDVGNTAAFLCSDLSKGITGQIIYVDGGFNITAMSNSE.

NAD(+) is bound by residues Gly-13, 19 to 20 (SI), 64 to 65 (DV), and Ile-92. Ala-95 serves as a coordination point for substrate. Catalysis depends on proton acceptor residues Tyr-146 and Tyr-156. NAD(+) contacts are provided by residues Lys-163 and 192-194 (IKT).

This sequence belongs to the short-chain dehydrogenases/reductases (SDR) family. FabI subfamily. As to quaternary structure, homotetramer.

It catalyses the reaction a 2,3-saturated acyl-[ACP] + NAD(+) = a (2E)-enoyl-[ACP] + NADH + H(+). The protein operates within lipid metabolism; fatty acid biosynthesis. It functions in the pathway cofactor biosynthesis; biotin biosynthesis. In terms of biological role, catalyzes the reduction of a carbon-carbon double bond in an enoyl moiety that is covalently linked to an acyl carrier protein (ACP). Involved in the elongation cycle of fatty acid which are used in the lipid metabolism and in the biotin biosynthesis. The chain is Enoyl-[acyl-carrier-protein] reductase [NADH] FabI (fabI) from Buchnera aphidicola subsp. Baizongia pistaciae (strain Bp).